The chain runs to 21 residues: Bombinin-H4 (21 aa).

At Ile-2 the chain carries D-allo-isoleucine. Position 20 is an isoleucine amide (Ile-20).

Belongs to the bombinin family. Expressed by the skin glands.

It is found in the secreted. Has antimicrobial and hemolytic activities. The polypeptide is Bombinin-H4 (Bombina variegata (Yellow-bellied toad)).